A 179-amino-acid polypeptide reads, in one-letter code: ATP synthase subunit delta (179 aa).

It belongs to the ATPase delta chain family. F-type ATPases have 2 components, F(1) - the catalytic core - and F(0) - the membrane proton channel. F(1) has five subunits: alpha(3), beta(3), gamma(1), delta(1), epsilon(1). F(0) has three main subunits: a(1), b(2) and c(10-14). The alpha and beta chains form an alternating ring which encloses part of the gamma chain. F(1) is attached to F(0) by a central stalk formed by the gamma and epsilon chains, while a peripheral stalk is formed by the delta and b chains.

It localises to the cell membrane. F(1)F(0) ATP synthase produces ATP from ADP in the presence of a proton or sodium gradient. F-type ATPases consist of two structural domains, F(1) containing the extramembraneous catalytic core and F(0) containing the membrane proton channel, linked together by a central stalk and a peripheral stalk. During catalysis, ATP synthesis in the catalytic domain of F(1) is coupled via a rotary mechanism of the central stalk subunits to proton translocation. In terms of biological role, this protein is part of the stalk that links CF(0) to CF(1). It either transmits conformational changes from CF(0) to CF(1) or is implicated in proton conduction. This is ATP synthase subunit delta from Clostridium perfringens (strain SM101 / Type A).